Reading from the N-terminus, the 536-residue chain is uncharacterized protein (536 aa).

Topologically, residues 1-8 (MVSIKRYE) are cytoplasmic. The helical transmembrane segment at 9 to 29 (IISFVIAAFFFLSGLSMWIAF) threads the bilayer. Residues 30–502 (WPIFNSELRS…VWLGVIIVPR (473 aa)) lie on the Extracellular side of the membrane. Asparagine 73, asparagine 236, asparagine 363, and asparagine 376 each carry an N-linked (GlcNAc...) asparagine glycan. Residues 503-523 (IIEYLKFVLIFISICILTTLL) traverse the membrane as a helical segment. Residues 524 to 536 (VIRVRVKGTVSVV) are Cytoplasmic-facing.

Belongs to the CD36 family.

The protein resides in the membrane. This is an uncharacterized protein from Caenorhabditis elegans.